Consider the following 755-residue polypeptide: Glucosylglycerol-phosphate synthase (755 aa).

Belongs to the glycosyltransferase 20 family.

The enzyme catalyses ADP-alpha-D-glucose + sn-glycerol 3-phosphate = 2-O-(alpha-D-glucopyranosyl)-sn-glycerol 3-phosphate + ADP + H(+). Its pathway is glycan metabolism; glucosylglycerol biosynthesis. Functionally, involved in salt tolerance by producing GG-phosphate from ADP-glucose and glycerol-3-phosphate (G3P), an intermediate in the synthesis of the osmolyte glucosylglycerol (GG). The sequence is that of Glucosylglycerol-phosphate synthase (ggpS) from Pseudomonas anguilliseptica.